Here is a 154-residue protein sequence, read N- to C-terminus: Large-conductance mechanosensitive channel (154 aa).

Transmembrane regions (helical) follow at residues 14 to 34, 38 to 58, and 81 to 101; these read VMDL…VTSL, IITP…LFIN, and GLFL…FIVI.

The protein belongs to the MscL family. Homopentamer.

Its subcellular location is the cell membrane. In terms of biological role, channel that opens in response to stretch forces in the membrane lipid bilayer. May participate in the regulation of osmotic pressure changes within the cell. This chain is Large-conductance mechanosensitive channel, found in Brevibacillus brevis (strain 47 / JCM 6285 / NBRC 100599).